A 469-amino-acid chain; its full sequence is MPREIITIQVGQCGNQIGMEFWKQLCLEHGIGKDGLLEDFATQGGDRKDVFFYQADDQHFIPRSLLIDLEPRVINGIQNSEYRNLYNHENIFVAEHGGGAGNNWASGYHQGEQFVDDIMDMVDREADGSDSLEGFVLCHSIAGGTGSGMGSYLLETLNDRYSKKLVQTYSVFPNQVETSDVVVQPYNSLLTLKRLTLNADCVVVLDNTALNRIAVERLHLSNPTFAQTNSLVSTVMSASTTTLRYPGYMNNDLVGLLASLIPTPRCHFLMTGYTPLTVERQVNMIRKTTVLDVMRRLLQTKNIMVSSYARTKEASQAKYISILNIIQGEVDPTQVHESLQRIRERKLVNFIYWAPASIQVALSRKSPYVQTTHRVSGLMLANHTSIRHLFSKCLGQYEKLRKKQAFLDNYRKFPMFADNDLSEFDESREIIESLVDEYKACESPDYIKWGMEDPGEANVVAALDSKLVV.

142–148 (AGGTGSG) lines the GTP pocket.

Belongs to the tubulin family.

Its subcellular location is the cytoplasm. It is found in the cytoskeleton. The protein resides in the microtubule organizing center. Functionally, tubulin is the major constituent of microtubules. The gamma chain is found at microtubule organizing centers (MTOC) such as the spindle poles, suggesting that it is involved in the minus-end nucleation of microtubule assembly. The sequence is that of Tubulin gamma-1 chain (TUBG1) from Zea mays (Maize).